The following is a 166-amino-acid chain: Small ribosomal subunit protein uS5 (166 aa).

An S5 DRBM domain is found at 11 to 74 (LQEKLIAVNR…EKARRNMINV (64 aa)).

Belongs to the universal ribosomal protein uS5 family. Part of the 30S ribosomal subunit. Contacts proteins S4 and S8.

In terms of biological role, with S4 and S12 plays an important role in translational accuracy. Located at the back of the 30S subunit body where it stabilizes the conformation of the head with respect to the body. The chain is Small ribosomal subunit protein uS5 from Cronobacter sakazakii (strain ATCC BAA-894) (Enterobacter sakazakii).